Consider the following 547-residue polypeptide: MSSAKLGSASEDVSRRDANYHPTVWGDFFLTHSSNFLENNDSILEKHEELKQEVRNLLVVETSDLPSKIQLTDEIIRLGVGYHFETEIKAQLEKLHDHQLHLNFDLLTTYVWFRLLRGHGFSISSDVFKRFKNTKGEFETEDAWTLWCLYEATHLRVDGEDILEEAIQFSRKKLEALLPELSFPLNECVRDALHIPYHRNVQRLAARQYIPQYDAEPTKIESLSLFAKIDFNMLQALHQSVLREASRWWKEFDFPSKLPYARDRIAEGYYWMMGAHFEPKFSLSRKFLNRIIGITPLIDDTYDVYGTLEEVTLFTEAVERWDIEAVKDIPKYMQVIHTGMLGIFEDFKDNLINARGKDYCIDYAIEVFKEIVRSYQREAEYFHTGYVPSYDEYMENSIISGGYKMFIILMLIGRGEFELKETLDWASTIPEMVKASSLIARYIDDLQTYKAEEERGETVSAVRCYMREFGVSEEQACKKMREMIEIEWKRLNKTTLEADEISSSVVIPSLNFTRVLEVMYDKGDGYSDSQGVTKDRIAALLRHAIEI.

Residues D299, D303, and D444 each coordinate Mg(2+). A DDXXD motif motif is present at residues 299–303 (DDTYD).

This sequence belongs to the terpene synthase family. Requires Mg(2+) as cofactor.

This Aquilaria crassna (Eagle wood) protein is Inactive delta-guaiene synthase (C1).